The sequence spans 243 residues: Aquaporin SIP1-2 (243 aa).

Transmembrane regions (helical) follow at residues 9 to 29 (AAAA…TLGA) and 45 to 65 (FALL…NILC). An NPA 1 motif is present at residues 74–76 (NPT). Transmembrane regions (helical) follow at residues 98–118 (LPAQ…LMPA), 136–156 (GAGA…LIIV), and 163–183 (IIKT…GAAY). Residues 189-191 (NPA) carry the NPA 2 motif. The chain crosses the membrane as a helical span at residues 211 to 231 (VYWICPFIGAILAAWIFRAMF).

The protein belongs to the MIP/aquaporin (TC 1.A.8) family. SIP (TC 1.A.8.10) subfamily.

It localises to the membrane. Functionally, aquaporins facilitate the transport of water and small neutral solutes across cell membranes. This Zea mays (Maize) protein is Aquaporin SIP1-2 (SIP1-2).